The chain runs to 400 residues: Enoyl-[acyl-carrier-protein] reductase [NADH] 1 (400 aa).

NAD(+) contacts are provided by residues 48–53 (GASSGY), 74–75 (FE), 111–112 (DA), and 139–140 (LA). Tyrosine 225 lines the substrate pocket. Tyrosine 235 serves as the catalytic Proton donor. Residues lysine 244 and 273–275 (VVT) contribute to the NAD(+) site.

This sequence belongs to the TER reductase family. As to quaternary structure, monomer.

The catalysed reaction is a 2,3-saturated acyl-[ACP] + NAD(+) = a (2E)-enoyl-[ACP] + NADH + H(+). Its pathway is lipid metabolism; fatty acid biosynthesis. Involved in the final reduction of the elongation cycle of fatty acid synthesis (FAS II). Catalyzes the reduction of a carbon-carbon double bond in an enoyl moiety that is covalently linked to an acyl carrier protein (ACP). This chain is Enoyl-[acyl-carrier-protein] reductase [NADH] 1, found in Vibrio parahaemolyticus serotype O3:K6 (strain RIMD 2210633).